A 471-amino-acid polypeptide reads, in one-letter code: Acetylcholinesterase collagenic tail peptide (471 aa).

The N-terminal stretch at 1–30 (MLGILLQKATATLASGLNSSRAGMFPIALG) is a signal peptide. Residues 70-86 (CCLLTPPPPPMFPPPFF) form a PRAD region. Collagen-like domains lie at 118–282 (GPPG…SGLP) and 293–307 (GPKG…VGRC). Disordered stretches follow at residues 140-205 (EIGE…GEKG) and 237-267 (KGVS…IGPP). Low complexity-rich tracts occupy residues 155–164 (VRGPRGMPGS) and 242–251 (APGHRGPVGR). Repeat copies occupy residues 388-413 (FCGD…TDSC) and 420-443 (YCGD…YHTC). The segment at 388–443 (FCGDEIVQVENGEECDDGNRIVTDSCINCKQAYCGDGYLQSGLEECDGKDFGYHTC) is 2 X 26 AA approximate repeats.

The protein belongs to the COLQ family. As to quaternary structure, the asymmetric form of AChE is a disulfide-bonded oligomer composed of a collagenic subunit (Q) and a variable number of asymmetric (T) catalytic subunits. The N-terminal of the collagenic subunit (Q) associates with the C-terminal of the catalytic subunit (T). Expressed in electric organs but not in muscle.

It is found in the synapse. Anchors the catalytic subunits of asymmetric AChE to the synaptic basal lamina. The protein is Acetylcholinesterase collagenic tail peptide of Torpedo marmorata (Marbled electric ray).